A 74-amino-acid polypeptide reads, in one-letter code: Protein krueppel (74 aa).

4 consecutive C2H2-type zinc fingers follow at residues 1 to 4 (ERTH), 10 to 32 (FECP…MRLH), 38 to 60 (YHCS…LRVH), and 66 to 74 (YTCEICDGK).

Belongs to the krueppel C2H2-type zinc-finger protein family.

It localises to the nucleus. Krueppel is a gap class segmentation protein. This Musca domestica (House fly) protein is Protein krueppel (Kr).